Reading from the N-terminus, the 36-residue chain is Pancreatic polypeptide (36 aa).

Position 36 is a tyrosine amide (Y36).

This sequence belongs to the NPY family.

Its subcellular location is the secreted. Functionally, hormone secreted by pancreatic cells that acts as a regulator of pancreatic and gastrointestinal functions probably by signaling through the G protein-coupled receptor NPY4R2. This is Pancreatic polypeptide (PPY) from Tapirus pinchaque (Mountain tapir).